Here is a 274-residue protein sequence, read N- to C-terminus: Acetyl-coenzyme A carboxylase carboxyl transferase subunit alpha (274 aa).

The CoA carboxyltransferase C-terminal domain occupies 2-250 (NKEFIKSIVV…KKEIMNAMNE (249 aa)).

The protein belongs to the AccA family. In terms of assembly, acetyl-CoA carboxylase is a heterohexamer composed of biotin carboxyl carrier protein (AccB), biotin carboxylase (AccC) and two subunits each of ACCase subunit alpha (AccA) and ACCase subunit beta (AccD).

Its subcellular location is the cytoplasm. The enzyme catalyses N(6)-carboxybiotinyl-L-lysyl-[protein] + acetyl-CoA = N(6)-biotinyl-L-lysyl-[protein] + malonyl-CoA. Its pathway is lipid metabolism; malonyl-CoA biosynthesis; malonyl-CoA from acetyl-CoA: step 1/1. Functionally, component of the acetyl coenzyme A carboxylase (ACC) complex. First, biotin carboxylase catalyzes the carboxylation of biotin on its carrier protein (BCCP) and then the CO(2) group is transferred by the carboxyltransferase to acetyl-CoA to form malonyl-CoA. This Clostridium botulinum (strain Alaska E43 / Type E3) protein is Acetyl-coenzyme A carboxylase carboxyl transferase subunit alpha.